A 100-amino-acid polypeptide reads, in one-letter code: Urease subunit gamma (100 aa).

This sequence belongs to the urease gamma subunit family. Heterotrimer of UreA (gamma), UreB (beta) and UreC (alpha) subunits. Three heterotrimers associate to form the active enzyme.

The protein localises to the cytoplasm. The catalysed reaction is urea + 2 H2O + H(+) = hydrogencarbonate + 2 NH4(+). The protein operates within nitrogen metabolism; urea degradation; CO(2) and NH(3) from urea (urease route): step 1/1. This is Urease subunit gamma from Lysinibacillus sphaericus (strain C3-41).